Reading from the N-terminus, the 309-residue chain is ADP-L-glycero-D-manno-heptose-6-epimerase (309 aa).

NADP(+)-binding positions include 10–11 (FI), 31–32 (DN), Lys38, Lys53, 75–79 (LGACS), and Asn92. The Proton acceptor role is filled by Tyr140. Lys144 contributes to the NADP(+) binding site. Asn169 is a binding site for substrate. Positions 170 and 178 each coordinate NADP(+). Lys178 serves as the catalytic Proton acceptor. Residues Ser180, His187, 201-204 (FLGS), Arg209, and Tyr272 each bind substrate.

The protein belongs to the NAD(P)-dependent epimerase/dehydratase family. HldD subfamily. As to quaternary structure, homopentamer. NADP(+) is required as a cofactor.

It catalyses the reaction ADP-D-glycero-beta-D-manno-heptose = ADP-L-glycero-beta-D-manno-heptose. The protein operates within nucleotide-sugar biosynthesis; ADP-L-glycero-beta-D-manno-heptose biosynthesis; ADP-L-glycero-beta-D-manno-heptose from D-glycero-beta-D-manno-heptose 7-phosphate: step 4/4. Its function is as follows. Catalyzes the interconversion between ADP-D-glycero-beta-D-manno-heptose and ADP-L-glycero-beta-D-manno-heptose via an epimerization at carbon 6 of the heptose. The protein is ADP-L-glycero-D-manno-heptose-6-epimerase of Hamiltonella defensa subsp. Acyrthosiphon pisum (strain 5AT).